The following is a 458-amino-acid chain: MYESVDVVGLTPSPNPFLSMDYYHQNRGCLIPDKGLVSGAARGFRNPHWSGSNHSVETQSTSSEEIVPSPPSPPPPPRVYKPCFVCQDKSSGYHYGVSACEGCKGFFRRSIQKNMVYTCHREKSCIINKVTRNRCQYCRLQKCLEVGMSKESVRNDRNKRKKDDKKQECLENYVLSPDTEKMIEQVRKAHQETFPSLCQLGKYTTNNSADHRVALDVDLWDKFSELSTKCIIKTVEFAKQLPGFTTLTIADQITLLKAACLDILILRICTRYTPDQDTMTFSDGLTLNRTQMHNAGFGPLTDLVFAFANQLLPLEMDDAETGLLSAICLLCGDRQDLEQSDKVDELQEPLLEALKIYVRNRRPHKPHMFPKMLMKITDLRSISAKGAERVITLKMEIPGSMPPLIQEMLENSEGLEGGGSKGAGGGGGGGGGKGAPPGSCSPSLSPSSAHSSPSAHSP.

The interval 1-79 is modulating; the sequence is MYESVDVVGL…PPSPPPPPRV (79 aa). A disordered region spans residues 48-75; sequence HWSGSNHSVETQSTSSEEIVPSPPSPPP. Residues 49 to 64 show a composition bias toward polar residues; it reads WSGSNHSVETQSTSSE. Positions 80–155 form a DNA-binding region, nuclear receptor; that stretch reads YKPCFVCQDK…VGMSKESVRN (76 aa). 2 consecutive NR C4-type zinc fingers follow at residues 83–103 and 119–138; these read CFVC…CEGC and CHRE…CQYC. The tract at residues 156–177 is hinge; sequence DRNKRKKDDKKQECLENYVLSP. Residues 178-412 enclose the NR LBD domain; sequence DTEKMIEQVR…PLIQEMLENS (235 aa). Residues 403–411 carry the 9aaTAD motif; it reads PLIQEMLEN. The interval 411-458 is disordered; it reads NSEGLEGGGSKGAGGGGGGGGGKGAPPGSCSPSLSPSSAHSSPSAHSP. The segment covering 415-435 has biased composition (gly residues); it reads LEGGGSKGAGGGGGGGGGKGA. Positions 436–458 are enriched in low complexity; the sequence is PPGSCSPSLSPSSAHSSPSAHSP.

Belongs to the nuclear hormone receptor family. NR1 subfamily. Heterodimer; with an rxr molecule. Binds DNA preferentially as a rar/rxr heterodimer. In the embryo, zygotic expression largely overlaps that of raraa, with high levels in hindbrain, lateral plate mesoderm (LPM) and tail bud, but in later stages rarab is expressed more broadly in the brain, pectoral fin bud and pharyngeal arches.

The protein resides in the nucleus. In terms of biological role, receptor for retinoic acid. Retinoic acid receptors bind as heterodimers to their target response elements in response to their ligands, all-trans or 9-cis retinoic acid, and regulate gene expression in various biological processes. The rar/rxr heterodimers bind to the retinoic acid response elements (RARE) composed of tandem 5'-AGGTCA-3' sites known as DR1-DR5. Required for hindbrain development and, in lateral plate mesoderm, for specification of the pectoral fins. The protein is Retinoic acid receptor alpha-B of Danio rerio (Zebrafish).